The primary structure comprises 273 residues: Glutamate racemase (273 aa).

Residues 9-10 and 41-42 each bind substrate; these read DS and YG. Catalysis depends on C73, which acts as the Proton donor/acceptor. 74-75 is a binding site for substrate; sequence NT. The Proton donor/acceptor role is filled by C183. Substrate is bound at residue 184–185; that stretch reads TH.

The protein belongs to the aspartate/glutamate racemases family.

It carries out the reaction L-glutamate = D-glutamate. It functions in the pathway cell wall biogenesis; peptidoglycan biosynthesis. In terms of biological role, provides the (R)-glutamate required for cell wall biosynthesis. This is Glutamate racemase from Shewanella oneidensis (strain ATCC 700550 / JCM 31522 / CIP 106686 / LMG 19005 / NCIMB 14063 / MR-1).